The primary structure comprises 101 residues: Multivesicular body sorting factor 12 (101 aa).

Met-1 bears the N-acetylmethionine mark. Ser-94 carries the phosphoserine modification.

As to quaternary structure, component of the ESCRT-I complex (endosomal sorting complex required for transport I) which consists of STP22, VPS28, SRN2 and MVB12 in a 1:1:1:1 stoichiometry. Interacts with STP22 and SRN2.

It is found in the cytoplasm. Its subcellular location is the endosome. The protein resides in the late endosome membrane. In terms of biological role, component of the ESCRT-I complex, a regulator of vesicular trafficking process. Binds to ubiquitinated cargo proteins and is required for the sorting of endocytic ubiquitinated cargos into multivesicular bodies (MVBs). Appears to be involved in cargo sorting and release of the ESCRT-I complex from the MVBs. The chain is Multivesicular body sorting factor 12 (MVB12) from Saccharomyces cerevisiae (strain ATCC 204508 / S288c) (Baker's yeast).